Reading from the N-terminus, the 90-residue chain is Molybdopterin synthase sulfur carrier subunit (90 aa).

Residue Gly-90 is modified to 1-thioglycine; alternate. A Glycyl adenylate; alternate modification is found at Gly-90.

Belongs to the MoaD family. MOCS2A subfamily. As to quaternary structure, heterotetramer; composed of 2 small (Mocs2A) and 2 large (Mocs2B) subunits. Post-translationally, C-terminal thiocarboxylation occurs in 2 steps, it is first acyl-adenylated (-COAMP) via the hesA/moeB/thiF part of MOCS3, then thiocarboxylated (-COSH) via the rhodanese domain of MOCS3.

The protein localises to the cytoplasm. The protein operates within cofactor biosynthesis; molybdopterin biosynthesis. In terms of biological role, acts as a sulfur carrier required for molybdopterin biosynthesis. Component of the molybdopterin synthase complex that catalyzes the conversion of precursor Z into molybdopterin by mediating the incorporation of 2 sulfur atoms into precursor Z to generate a dithiolene group. In the complex, serves as sulfur donor by being thiocarboxylated (-COSH) at its C-terminus by MOCS3. After interaction with Mocs2B, the sulfur is then transferred to precursor Z to form molybdopterin. This is Molybdopterin synthase sulfur carrier subunit from Drosophila ananassae (Fruit fly).